Here is a 313-residue protein sequence, read N- to C-terminus: 2,3-dihydroxyphenylpropionate/2,3-dihydroxicinnamic acid 1,2-dioxygenase (313 aa).

H115 acts as the Proton donor in catalysis. H179 functions as the Proton acceptor in the catalytic mechanism.

This sequence belongs to the LigB/MhpB extradiol dioxygenase family. Homotetramer. Fe(2+) is required as a cofactor.

It carries out the reaction 3-(2,3-dihydroxyphenyl)propanoate + O2 = (2Z,4E)-2-hydroxy-6-oxonona-2,4-dienedioate + H(+). It catalyses the reaction (2E)-3-(2,3-dihydroxyphenyl)prop-2-enoate + O2 = (2Z,4E,7E)-2-hydroxy-6-oxonona-2,4,7-trienedioate + H(+). Its pathway is aromatic compound metabolism; 3-phenylpropanoate degradation. In terms of biological role, catalyzes the non-heme iron(II)-dependent oxidative cleavage of 2,3-dihydroxyphenylpropionic acid and 2,3-dihydroxicinnamic acid into 2-hydroxy-6-ketononadienedioate and 2-hydroxy-6-ketononatrienedioate, respectively. The chain is 2,3-dihydroxyphenylpropionate/2,3-dihydroxicinnamic acid 1,2-dioxygenase from Mycolicibacterium smegmatis (strain ATCC 700084 / mc(2)155) (Mycobacterium smegmatis).